A 156-amino-acid chain; its full sequence is Cytochrome c-type biogenesis protein CcmE 2 (156 aa).

At Met1–Arg8 the chain is on the cytoplasmic side. Residues Leu9 to Ala29 form a helical; Signal-anchor for type II membrane protein membrane-spanning segment. Residues Leu30–Arg156 are Periplasmic-facing. The heme site is built by His123 and Tyr127. A disordered region spans residues Lys135–Arg156.

This sequence belongs to the CcmE/CycJ family.

The protein resides in the cell inner membrane. Heme chaperone required for the biogenesis of c-type cytochromes. Transiently binds heme delivered by CcmC and transfers the heme to apo-cytochromes in a process facilitated by CcmF and CcmH. This Xanthomonas oryzae pv. oryzae (strain MAFF 311018) protein is Cytochrome c-type biogenesis protein CcmE 2.